We begin with the raw amino-acid sequence, 172 residues long: Lipopolysaccharide export system protein LptA (172 aa).

A signal peptide spans 1-23; it reads MKLVSNKILFLATMVLASSSAFA.

Belongs to the LptA family. In terms of assembly, component of the lipopolysaccharide transport and assembly complex.

The protein resides in the periplasm. Involved in the assembly of lipopolysaccharide (LPS). Required for the translocation of LPS from the inner membrane to the outer membrane. May form a bridge between the inner membrane and the outer membrane, via interactions with LptC and LptD, thereby facilitating LPS transfer across the periplasm. This Haemophilus influenzae (strain ATCC 51907 / DSM 11121 / KW20 / Rd) protein is Lipopolysaccharide export system protein LptA.